Consider the following 129-residue polypeptide: Small ribosomal subunit protein uS11 (129 aa).

The protein belongs to the universal ribosomal protein uS11 family. In terms of assembly, part of the 30S ribosomal subunit. Interacts with proteins S7 and S18. Binds to IF-3.

In terms of biological role, located on the platform of the 30S subunit, it bridges several disparate RNA helices of the 16S rRNA. Forms part of the Shine-Dalgarno cleft in the 70S ribosome. This Bacillus mycoides (strain KBAB4) (Bacillus weihenstephanensis) protein is Small ribosomal subunit protein uS11.